Consider the following 311-residue polypeptide: JNK1/MAPK8-associated membrane protein (311 aa).

At 1–57 (MAVDIQPACLGLYCGKTLLFKNGSSEIYGECGVCPRGQRTNAQKYCQPCTESPELYD) the chain is on the lumenal side. Asn22 carries N-linked (GlcNAc...) asparagine glycosylation. The helical transmembrane segment at 58–78 (WLYLGFMAMLPLVLHWFFIEW) threads the bilayer. Over 79 to 87 (YSGKKSSSA) the chain is Cytoplasmic. A helical membrane pass occupies residues 88–108 (LFQHITALFECTMAAIITLLV). At 109-149 (SDPVGVLYIRSCRVLMLSDWYTMLYNPSPDYVTTVHCTHEA) the chain is on the lumenal side. Residues 150 to 170 (VYPLYTIVFVYYAFCLVLMML) form a helical membrane-spanning segment. At 171–188 (LRPLLVKKIACGLGKSDR) the chain is on the cytoplasmic side. The chain crosses the membrane as a helical span at residues 189–209 (FKSIYAALYFFPILTVLQAVG). Gly210 is a topological domain (lumenal). The helical transmembrane segment at 211–231 (GLLYYAFPYIILVLSLVTLAV) threads the bilayer. At 232–250 (YMSASEIENCYDLLVRKKR) the chain is on the cytoplasmic side. Residues 251–271 (LIVLFSHWLLHAYGIVSISRV) traverse the membrane as a helical segment. Residues 272-277 (DRLEHD) lie on the Lumenal side of the membrane. The chain crosses the membrane as a helical span at residues 278–298 (LPLLALVPTPALFYLFTAKFT). Topologically, residues 299–311 (EPSRILSEGANGH) are cytoplasmic.

In terms of assembly, interacts with RNF5 and MAPK8, but not with MAPK9. Binding to MAPK8 occurs before and after exposure to stress, such as UV irradiation. After exposure to stress, interacts with phosphorylated MAPK8. Competes with DUSP10 for MAPK8 binding. Associates with multiple components of the proteasome and with ERAD regulatory proteins, including AMFR/GP78, CANX, PSMC1, PSMC2, PSMC3/TBP1, PSMC5, PSMC6, PSMD8, SEC61-ALPHA and UFD1. In terms of processing, ubiquitinated by RNF5 via 'Lys-63'-linked ubiquitin linkage in a UBE2N-dependent manner. Ubiquitination decreases association with components of the proteasome and ERAD. In terms of tissue distribution, expressed in numerous tissues, including brain, spleen, thymus, liver, kidney and testis.

The protein localises to the endoplasmic reticulum membrane. In terms of biological role, regulates the duration of MAPK8 activity in response to various stress stimuli. Facilitates degradation of misfolded endoplasmic reticulum (ER) proteins through the recruitment of components of the proteasome and endoplasmic reticulum-associated degradation (ERAD) system. The polypeptide is JNK1/MAPK8-associated membrane protein (Jkamp) (Mus musculus (Mouse)).